Reading from the N-terminus, the 520-residue chain is Phospholipase C A (520 aa).

A signal peptide (tat-type signal) is located at residues 1–38; it reads MSASPLLGMSRREFLTKLTGAGAAAFLMDWAAPVIEKA.

This sequence belongs to the bacterial phospholipase C family. In terms of processing, predicted to be exported by the Tat system. The position of the signal peptide cleavage has not been experimentally proven.

The protein resides in the secreted. Its subcellular location is the cell wall. It carries out the reaction a 1,2-diacyl-sn-glycero-3-phosphocholine + H2O = phosphocholine + a 1,2-diacyl-sn-glycerol + H(+). Its function is as follows. Involved in virulence. Induces cytotoxic effects on mouse macrophage cell lines, via direct or indirect enzymatic hydrolysis of cell membrane phospholipids. Hydrolyzes phosphatidylcholine. The chain is Phospholipase C A from Mycobacterium tuberculosis (strain CDC 1551 / Oshkosh).